Reading from the N-terminus, the 429-residue chain is Glucose-6-phosphate isomerase (429 aa).

Catalysis depends on glutamate 282, which acts as the Proton donor. Catalysis depends on residues histidine 303 and lysine 418.

Belongs to the GPI family.

It is found in the cytoplasm. It carries out the reaction alpha-D-glucose 6-phosphate = beta-D-fructose 6-phosphate. Its pathway is carbohydrate biosynthesis; gluconeogenesis. It participates in carbohydrate degradation; glycolysis; D-glyceraldehyde 3-phosphate and glycerone phosphate from D-glucose: step 2/4. Functionally, catalyzes the reversible isomerization of glucose-6-phosphate to fructose-6-phosphate. The polypeptide is Glucose-6-phosphate isomerase (Mesomycoplasma hyopneumoniae (strain J / ATCC 25934 / NCTC 10110) (Mycoplasma hyopneumoniae)).